Consider the following 297-residue polypeptide: Homoserine kinase (297 aa).

82 to 92 (PLTRGLGSSAS) contributes to the ATP binding site.

This sequence belongs to the GHMP kinase family. Homoserine kinase subfamily.

It localises to the cytoplasm. The catalysed reaction is L-homoserine + ATP = O-phospho-L-homoserine + ADP + H(+). The protein operates within amino-acid biosynthesis; L-threonine biosynthesis; L-threonine from L-aspartate: step 4/5. Its function is as follows. Catalyzes the ATP-dependent phosphorylation of L-homoserine to L-homoserine phosphate. The sequence is that of Homoserine kinase from Bacillus thuringiensis (strain Al Hakam).